We begin with the raw amino-acid sequence, 306 residues long: UDP-N-acetylenolpyruvoylglucosamine reductase (306 aa).

The region spanning 30 to 216 (RIGGPVPYIL…KSKLIDFSTR (187 aa)) is the FAD-binding PCMH-type domain. Residue Arg-180 is part of the active site. Residue Ser-230 is the Proton donor of the active site. Glu-301 is an active-site residue.

It belongs to the MurB family. It depends on FAD as a cofactor.

The protein resides in the cytoplasm. It carries out the reaction UDP-N-acetyl-alpha-D-muramate + NADP(+) = UDP-N-acetyl-3-O-(1-carboxyvinyl)-alpha-D-glucosamine + NADPH + H(+). It participates in cell wall biogenesis; peptidoglycan biosynthesis. Its function is as follows. Cell wall formation. This chain is UDP-N-acetylenolpyruvoylglucosamine reductase, found in Petrotoga mobilis (strain DSM 10674 / SJ95).